The following is a 239-amino-acid chain: Tetraspanin-9 (239 aa).

3 helical membrane passes run 14–34 (FLFNLIFWLCGCGLLGVGIWL), 56–76 (LVIAIGTIVMVTGFLGCLGAI), and 86–106 (FFIVLLIILLAELILIILFFV). Residues Asn-180 and Asn-181 are each glycosylated (N-linked (GlcNAc...) asparagine). The helical transmembrane segment at 204–224 (VLGTVGMCLLITQILGMAFSM) threads the bilayer.

Belongs to the tetraspanin (TM4SF) family. As to quaternary structure, found in a complex with GP6. Glycosylated.

It localises to the membrane. In Ovis aries (Sheep), this protein is Tetraspanin-9 (TSPAN9).